A 241-amino-acid chain; its full sequence is Ribose-5-phosphate isomerase A (241 aa).

Substrate contacts are provided by residues 28–31 (TGST), 83–86 (DGAD), and 96–99 (KGGG). Glu-105 serves as the catalytic Proton acceptor. Lys-123 is a binding site for substrate.

The protein belongs to the ribose 5-phosphate isomerase family. As to quaternary structure, homodimer.

It catalyses the reaction aldehydo-D-ribose 5-phosphate = D-ribulose 5-phosphate. It functions in the pathway carbohydrate degradation; pentose phosphate pathway; D-ribose 5-phosphate from D-ribulose 5-phosphate (non-oxidative stage): step 1/1. Catalyzes the reversible conversion of ribose-5-phosphate to ribulose 5-phosphate. This chain is Ribose-5-phosphate isomerase A, found in Rhodopseudomonas palustris (strain BisA53).